The primary structure comprises 327 residues: GTP 3',8-cyclase (327 aa).

The Radical SAM core domain maps to 4–226 (AFARDIHYLR…LRLGDHPGIR (223 aa)). Arg13 lines the GTP pocket. Residues Cys20 and Cys24 each contribute to the [4Fe-4S] cluster site. Position 26 (Tyr26) interacts with S-adenosyl-L-methionine. Cys27 contributes to the [4Fe-4S] cluster binding site. Arg63 lines the GTP pocket. Gly67 provides a ligand contact to S-adenosyl-L-methionine. Thr94 is a binding site for GTP. Ser118 provides a ligand contact to S-adenosyl-L-methionine. Lys155 contributes to the GTP binding site. Met189 contacts S-adenosyl-L-methionine. 2 residues coordinate [4Fe-4S] cluster: Cys254 and Cys257. Position 259–261 (259–261 (RLR)) interacts with GTP. Cys271 serves as a coordination point for [4Fe-4S] cluster.

This sequence belongs to the radical SAM superfamily. MoaA family. In terms of assembly, monomer and homodimer. It depends on [4Fe-4S] cluster as a cofactor.

It carries out the reaction GTP + AH2 + S-adenosyl-L-methionine = (8S)-3',8-cyclo-7,8-dihydroguanosine 5'-triphosphate + 5'-deoxyadenosine + L-methionine + A + H(+). The protein operates within cofactor biosynthesis; molybdopterin biosynthesis. Catalyzes the cyclization of GTP to (8S)-3',8-cyclo-7,8-dihydroguanosine 5'-triphosphate. The chain is GTP 3',8-cyclase from Heliobacterium modesticaldum (strain ATCC 51547 / Ice1).